The chain runs to 1127 residues: uncharacterized protein (1127 aa).

The N-terminal stretch at 1-26 (MRIHQRSAPCVPVLLFLFLPSAPLCA) is a signal peptide. The interval 533–600 (ETESLSPPAD…ASSSPSEMAV (68 aa)) is disordered. 2 stretches are compositionally biased toward low complexity: residues 536-549 (SLSPPADTASTPSP) and 583-599 (AGASEEADASSSPSEMA). The stretch at 1076–1126 (SEDEKEYQRALQELQKGNKLVASAVVEQLLQKDRNKKSAKIQQLKKRIDAQ) forms a coiled coil.

This is an uncharacterized protein from Treponema pallidum (strain Nichols).